A 95-amino-acid chain; its full sequence is Aspartyl/glutamyl-tRNA(Asn/Gln) amidotransferase subunit C (95 aa).

This sequence belongs to the GatC family. Heterotrimer of A, B and C subunits.

The enzyme catalyses L-glutamyl-tRNA(Gln) + L-glutamine + ATP + H2O = L-glutaminyl-tRNA(Gln) + L-glutamate + ADP + phosphate + H(+). The catalysed reaction is L-aspartyl-tRNA(Asn) + L-glutamine + ATP + H2O = L-asparaginyl-tRNA(Asn) + L-glutamate + ADP + phosphate + 2 H(+). Functionally, allows the formation of correctly charged Asn-tRNA(Asn) or Gln-tRNA(Gln) through the transamidation of misacylated Asp-tRNA(Asn) or Glu-tRNA(Gln) in organisms which lack either or both of asparaginyl-tRNA or glutaminyl-tRNA synthetases. The reaction takes place in the presence of glutamine and ATP through an activated phospho-Asp-tRNA(Asn) or phospho-Glu-tRNA(Gln). This Rhodospirillum centenum (strain ATCC 51521 / SW) protein is Aspartyl/glutamyl-tRNA(Asn/Gln) amidotransferase subunit C.